The primary structure comprises 100 residues: Large ribosomal subunit protein uL23 (100 aa).

This sequence belongs to the universal ribosomal protein uL23 family. Part of the 50S ribosomal subunit. Contacts protein L29, and trigger factor when it is bound to the ribosome.

In terms of biological role, one of the early assembly proteins it binds 23S rRNA. One of the proteins that surrounds the polypeptide exit tunnel on the outside of the ribosome. Forms the main docking site for trigger factor binding to the ribosome. The chain is Large ribosomal subunit protein uL23 from Aliivibrio fischeri (strain MJ11) (Vibrio fischeri).